A 267-amino-acid chain; its full sequence is Putative methylsterol monooxygenase DDB_G0270946 (267 aa).

The next 3 membrane-spanning stretches (helical) occupy residues 31-51, 72-92, and 110-130; these read FIAH…ADFI, YCAI…MYIF, and IPYL…YFYW. The Fatty acid hydroxylase domain maps to 119–249; sequence SSFIIEDFYF…FTYLDKIFGT (131 aa). Residues 132–136 carry the Histidine box-1 motif; sequence HRALH. Residues 145–149 carry the Histidine box-2 motif; it reads HKVHH. The short motif at 224–230 is the Histidine box-3 element; the sequence is FHDYHHE.

It belongs to the sterol desaturase family. Fe cation serves as cofactor.

It localises to the endoplasmic reticulum membrane. It catalyses the reaction 4,4-dimethyl-5alpha-cholest-7-en-3beta-ol + 6 Fe(II)-[cytochrome b5] + 3 O2 + 5 H(+) = 4alpha-carboxy-4beta-methyl-5alpha-cholest-7-ene-3beta-ol + 6 Fe(III)-[cytochrome b5] + 4 H2O. Its pathway is steroid biosynthesis; zymosterol biosynthesis; zymosterol from lanosterol: step 3/6. The chain is Putative methylsterol monooxygenase DDB_G0270946 from Dictyostelium discoideum (Social amoeba).